Reading from the N-terminus, the 362-residue chain is Alpha-2-HS-glycoprotein (362 aa).

The first 15 residues, 1–15, serve as a signal peptide directing secretion; sequence LILFFCLAQLWGCRA. In terms of domain architecture, Cystatin fetuin-A-type 1 spans 24 to 130; sequence YREPACDDVE…QFSVLFAKCD (107 aa). Disulfide bonds link Cys29-Cys353, Cys86-Cys97, Cys111-Cys129, Cys143-Cys146, Cys205-Cys216, and Cys227-Cys244. An N-linked (GlcNAc...) asparagine glycan is attached at Asn96. A phosphoserine mark is found at Ser131, Ser132, and Ser135. Positions 141-252 constitute a Cystatin fetuin-A-type 2 domain; it reads KVCPNCPLLA…TCTVFQTQPV (112 aa). N-linked (GlcNAc...) asparagine glycosylation is found at Asn153 and Asn173. Residues Ser314, Ser318, Ser321, and Ser323 each carry the phosphoserine modification. Thr332 carries O-linked (GalNAc...) threonine glycosylation.

This sequence belongs to the fetuin family. Phosphorylated by FAM20C in the extracellular medium. Expressed by the liver and secreted in plasma.

Its subcellular location is the secreted. The protein is Alpha-2-HS-glycoprotein (AHSG) of Sus scrofa (Pig).